The following is a 242-amino-acid chain: UDP-2,3-diacylglucosamine hydrolase (242 aa).

Asp8, His10, Asp41, Asn79, and His114 together coordinate Mn(2+). Position 79–80 (79–80) interacts with substrate; sequence NR. Substrate is bound by residues Asp122, Lys164, Lys167, and His195. The Mn(2+) site is built by His195 and His197.

It belongs to the LpxH family. Mn(2+) is required as a cofactor.

The protein resides in the cell inner membrane. The catalysed reaction is UDP-2-N,3-O-bis[(3R)-3-hydroxytetradecanoyl]-alpha-D-glucosamine + H2O = 2-N,3-O-bis[(3R)-3-hydroxytetradecanoyl]-alpha-D-glucosaminyl 1-phosphate + UMP + 2 H(+). The protein operates within glycolipid biosynthesis; lipid IV(A) biosynthesis; lipid IV(A) from (3R)-3-hydroxytetradecanoyl-[acyl-carrier-protein] and UDP-N-acetyl-alpha-D-glucosamine: step 4/6. Functionally, hydrolyzes the pyrophosphate bond of UDP-2,3-diacylglucosamine to yield 2,3-diacylglucosamine 1-phosphate (lipid X) and UMP by catalyzing the attack of water at the alpha-P atom. Involved in the biosynthesis of lipid A, a phosphorylated glycolipid that anchors the lipopolysaccharide to the outer membrane of the cell. This Vibrio parahaemolyticus serotype O3:K6 (strain RIMD 2210633) protein is UDP-2,3-diacylglucosamine hydrolase.